The chain runs to 221 residues: Probable septum site-determining protein MinC (221 aa).

It belongs to the MinC family. In terms of assembly, interacts with MinD and FtsZ.

Functionally, cell division inhibitor that blocks the formation of polar Z ring septums. Rapidly oscillates between the poles of the cell to destabilize FtsZ filaments that have formed before they mature into polar Z rings. Prevents FtsZ polymerization. This is Probable septum site-determining protein MinC from Shewanella baltica (strain OS223).